The following is a 76-amino-acid chain: RNA-binding protein KhpA (76 aa).

One can recognise a KH domain in the interval 29 to 76; it reads QNIIELRVSPKDVGKVIGKNGRIAKSLRAILTAASVKAGKNFSLEIID.

The protein belongs to the KhpA RNA-binding protein family. Forms a complex with KhpB.

It localises to the cytoplasm. In terms of biological role, a probable RNA chaperone. Forms a complex with KhpB which binds to cellular RNA and controls its expression. Plays a role in peptidoglycan (PG) homeostasis and cell length regulation. The protein is RNA-binding protein KhpA of Leptospira interrogans serogroup Icterohaemorrhagiae serovar copenhageni (strain Fiocruz L1-130).